The sequence spans 264 residues: Thymidylate synthase (264 aa).

Arginine 21 provides a ligand contact to dUMP. Histidine 51 lines the (6R)-5,10-methylene-5,6,7,8-tetrahydrofolate pocket. 126-127 lines the dUMP pocket; that stretch reads RR. The active-site Nucleophile is cysteine 146. DUMP contacts are provided by residues 166–169, asparagine 177, and 207–209; these read RSCD and HLY. Residue aspartate 169 coordinates (6R)-5,10-methylene-5,6,7,8-tetrahydrofolate. Alanine 263 serves as a coordination point for (6R)-5,10-methylene-5,6,7,8-tetrahydrofolate.

Belongs to the thymidylate synthase family. Bacterial-type ThyA subfamily. Homodimer.

The protein localises to the cytoplasm. It catalyses the reaction dUMP + (6R)-5,10-methylene-5,6,7,8-tetrahydrofolate = 7,8-dihydrofolate + dTMP. It functions in the pathway pyrimidine metabolism; dTTP biosynthesis. Its function is as follows. Catalyzes the reductive methylation of 2'-deoxyuridine-5'-monophosphate (dUMP) to 2'-deoxythymidine-5'-monophosphate (dTMP) while utilizing 5,10-methylenetetrahydrofolate (mTHF) as the methyl donor and reductant in the reaction, yielding dihydrofolate (DHF) as a by-product. This enzymatic reaction provides an intracellular de novo source of dTMP, an essential precursor for DNA biosynthesis. In Shewanella sp. (strain MR-4), this protein is Thymidylate synthase.